A 152-amino-acid chain; its full sequence is Deoxyuridine 5'-triphosphate nucleotidohydrolase (152 aa).

Residues 71–73, Asn-84, 88–90, and Met-98 contribute to the substrate site; these read RSG and LID.

This sequence belongs to the dUTPase family. The cofactor is Mg(2+).

It catalyses the reaction dUTP + H2O = dUMP + diphosphate + H(+). Its pathway is pyrimidine metabolism; dUMP biosynthesis; dUMP from dCTP (dUTP route): step 2/2. This enzyme is involved in nucleotide metabolism: it produces dUMP, the immediate precursor of thymidine nucleotides and it decreases the intracellular concentration of dUTP so that uracil cannot be incorporated into DNA. The chain is Deoxyuridine 5'-triphosphate nucleotidohydrolase from Shewanella piezotolerans (strain WP3 / JCM 13877).